Consider the following 265-residue polypeptide: Capsule polysaccharide export inner-membrane protein BexB (265 aa).

Transmembrane regions (helical) follow at residues 37 to 57 (IGFF…VMMW), 64 to 84 (KFST…AMMW), 118 to 138 (LLEV…LVMI), 151 to 171 (LIAW…ICAI), 178 to 198 (FGKI…AFFF), and 235 to 255 (ESIG…LVMV). The ABC transmembrane type-2 domain occupies 37–258 (IGFFWLFVEP…LLGLVMVKNF (222 aa)).

It belongs to the ABC-2 integral membrane protein family.

The protein localises to the cell inner membrane. Its function is as follows. May form an ATP-driven capsule polysaccharide export apparatus, in association with the BexA, BexC and BexD proteins. This is Capsule polysaccharide export inner-membrane protein BexB (bexB) from Haemophilus influenzae.